A 367-amino-acid polypeptide reads, in one-letter code: Probable cinnamyl alcohol dehydrogenase (367 aa).

Cysteine 47 serves as a coordination point for Zn(2+). Threonine 49 is an NADP(+) binding site. The Zn(2+) site is built by histidine 69, glutamate 70, cysteine 100, cysteine 103, cysteine 106, cysteine 114, and cysteine 163. Residues threonine 167, 188-193 (GLGGVG), 211-216 (SSSSKK), threonine 251, glycine 275, and 298-300 (SFI) each bind NADP(+).

It belongs to the zinc-containing alcohol dehydrogenase family. Homodimer. The cofactor is Zn(2+).

The catalysed reaction is (E)-cinnamyl alcohol + NADP(+) = (E)-cinnamaldehyde + NADPH + H(+). It carries out the reaction (E)-coniferol + NADP(+) = (E)-coniferaldehyde + NADPH + H(+). It catalyses the reaction (E)-sinapyl alcohol + NADP(+) = (E)-sinapaldehyde + NADPH + H(+). The enzyme catalyses (E)-4-coumaroyl alcohol + NADP(+) = (E)-4-coumaraldehyde + NADPH + H(+). The catalysed reaction is (E)-caffeyl alcohol + NADP(+) = (E)-caffeyl aldehyde + NADPH + H(+). It functions in the pathway aromatic compound metabolism; phenylpropanoid biosynthesis. Functionally, involved in lignin biosynthesis. May catalyze the final step specific for the production of lignin monomers, like coniferyl alcohol, sinapyl alcohol and 4-coumaryl alcohol. This Zea mays (Maize) protein is Probable cinnamyl alcohol dehydrogenase.